A 217-amino-acid polypeptide reads, in one-letter code: TLD domain-containing protein 2 (217 aa).

The tract at residues 1–48 (MKSLRWRYTRLPSQVEDALSGEEDKEEEEEKEEETTPAPTPVPEHPMV) is disordered. Acidic residues predominate over residues 19–35 (LSGEEDKEEEEEKEEET). The TLDc domain occupies 56–217 (QVLGASEMSQ…ISELEAWVLS (162 aa)).

The protein belongs to the OXR1 family.

This is TLD domain-containing protein 2 (TLDC2) from Bos taurus (Bovine).